Reading from the N-terminus, the 147-residue chain is Large ribosomal subunit protein bL9 (147 aa).

Belongs to the bacterial ribosomal protein bL9 family.

Binds to the 23S rRNA. The sequence is that of Large ribosomal subunit protein bL9 from Shouchella clausii (strain KSM-K16) (Alkalihalobacillus clausii).